Here is a 135-residue protein sequence, read N- to C-terminus: Small ribosomal subunit protein eS6 (135 aa).

Belongs to the eukaryotic ribosomal protein eS6 family.

The chain is Small ribosomal subunit protein eS6 from Halorubrum lacusprofundi (strain ATCC 49239 / DSM 5036 / JCM 8891 / ACAM 34).